The primary structure comprises 243 residues: Protein YagJ (243 aa).

This is Protein YagJ (yagJ) from Escherichia coli (strain K12).